The sequence spans 225 residues: Doublesex- and mab-3-related transcription factor C1 (225 aa).

The span at 1-12 (MQRPSGSREVRK) shows a compositional bias: basic and acidic residues. 2 disordered regions span residues 1–49 (MQRP…SHVH) and 179–216 (QTRH…LPSG). The span at 27-37 (RVKKHVVRRQK) shows a compositional bias: basic residues.

Belongs to the DMRT family.

This Rattus norvegicus (Rat) protein is Doublesex- and mab-3-related transcription factor C1 (Dmrtc1).